A 439-amino-acid polypeptide reads, in one-letter code: Nitroalkane oxidase (439 aa).

Residues 131–134 (LMHS), 139–141 (TAN), 169–171 (WPS), arginine 304, 313–314 (HQ), 375–379 (KAVGM), and 400–404 (LFDGG) contribute to the FAD site. The active-site Proton acceptor is the aspartate 402.

This sequence belongs to the acyl-CoA dehydrogenase family. As to quaternary structure, homotetramer. The cofactor is FAD.

The catalysed reaction is a primary nitroalkane + O2 + H2O = an aldehyde + nitrite + H2O2 + H(+). The enzyme catalyses a secondary nitroalkane + O2 + H2O = a ketone + nitrite + H2O2 + H(+). With respect to regulation, strongly inhibited by mercury chloride and KCN. Its function is as follows. Catalyzes the oxidative denitrification of neutral nitroalkanes, including 3-nitro-2-pentanol, 1-nitropropane, 2-nitropropane, nitroethane and nitrocyclohexane, and may thereby protect the organism against toxic compounds. Has no detectable acyl-CoA dehydrogenase activity. The chain is Nitroalkane oxidase from Fusarium oxysporum (Fusarium vascular wilt).